The sequence spans 122 residues: Putative 2'-deoxynucleoside 5'-phosphate N-hydrolase 1 (122 aa).

Residues 4-10 (FLSGSIR), Tyr19, His37, Glu83, and 105-107 (SAM) each bind substrate.

It belongs to the 2'-deoxynucleoside 5'-phosphate N-hydrolase 1 family. As to quaternary structure, monomer and homodimer.

It catalyses the reaction a pyrimidine 2'-deoxyribonucleoside 5'-phosphate + H2O = a pyrimidine nucleobase + 2-deoxy-D-ribose 5-phosphate. The catalysed reaction is a purine 2'-deoxyribonucleoside 5'-phosphate + H2O = a purine nucleobase + 2-deoxy-D-ribose 5-phosphate. Functionally, catalyzes the cleavage of the N-glycosidic bond of deoxyribonucleoside 5'-monophosphates to yield deoxyribose 5-phosphate and a purine or pyrimidine base. The sequence is that of Putative 2'-deoxynucleoside 5'-phosphate N-hydrolase 1 from Methanococcoides burtonii (strain DSM 6242 / NBRC 107633 / OCM 468 / ACE-M).